A 1462-amino-acid polypeptide reads, in one-letter code: Tyrosine-protein phosphatase 69D (1462 aa).

Residues 1–28 form the signal peptide; sequence MALLYRRMSMLLNIILAYIFLCAICVQG. Ig-like C2-type domains lie at 29–125 and 131–230; these read SVKQ…TEFQ and PSKV…KEIT. Residues 29–805 lie on the Extracellular side of the membrane; it reads SVKQEWAEIG…MDYYLSIGVK (777 aa). N-linked (GlcNAc...) asparagine glycosylation is found at Asn40, Asn58, Asn64, Asn85, Asn109, Asn119, Asn162, Asn191, Asn196, Asn209, Asn255, Asn288, Asn302, Asn429, Asn442, Asn451, Asn516, Asn613, Asn701, and Asn755. A disulfide bridge connects residues Cys45 and Cys112. A disulfide bond links Cys154 and Cys214. 3 Fibronectin type-III domains span residues 237–332, 334–435, and 439–547; these read PQVS…TLSY, PIFI…TMDG, and KPTN…TPDA. The chain crosses the membrane as a helical span at residues 806-823; it reads AGAVLLGVILVFIVLWVF. Residues 824-1462 lie on the Cytoplasmic side of the membrane; sequence HHKKTKNELQ…LHHIAESTLD (639 aa). Tyrosine-protein phosphatase domains follow at residues 893–1156 and 1187–1450; these read FLRE…LLDT and LEVE…IINY. Active-site phosphocysteine intermediate residues include Cys1097 and Cys1391.

The protein belongs to the protein-tyrosine phosphatase family. Receptor class subfamily.

The protein localises to the membrane. The catalysed reaction is O-phospho-L-tyrosyl-[protein] + H2O = L-tyrosyl-[protein] + phosphate. In terms of biological role, possible cell adhesion receptor. The chain is Tyrosine-protein phosphatase 69D (Ptp69D) from Drosophila melanogaster (Fruit fly).